The following is a 155-amino-acid chain: Ribosomal RNA large subunit methyltransferase H (155 aa).

S-adenosyl-L-methionine-binding positions include leucine 73, glycine 104, and 123 to 128; that span reads LSPLTL.

The protein belongs to the RNA methyltransferase RlmH family. As to quaternary structure, homodimer.

Its subcellular location is the cytoplasm. The enzyme catalyses pseudouridine(1915) in 23S rRNA + S-adenosyl-L-methionine = N(3)-methylpseudouridine(1915) in 23S rRNA + S-adenosyl-L-homocysteine + H(+). Specifically methylates the pseudouridine at position 1915 (m3Psi1915) in 23S rRNA. The chain is Ribosomal RNA large subunit methyltransferase H from Pseudomonas savastanoi pv. phaseolicola (strain 1448A / Race 6) (Pseudomonas syringae pv. phaseolicola (strain 1448A / Race 6)).